A 238-amino-acid chain; its full sequence is Probable transglycosylase SceD 1 (238 aa).

A signal peptide spans 1–27; the sequence is MKKTVVASTLAVGLGVTGFAAGNSADA. Positions 87 to 97 are enriched in polar residues; it reads TNAPAQETAEQ. Residues 87 to 161 form a disordered region; that stretch reads TNAPAQETAE…SEASEGSSVN (75 aa). The span at 102–156 shows a compositional bias: low complexity; the sequence is EQPQQTEQASTEQPAQEAAPQTEETQQPQQEATTQTTSSSNESTSNESSSSEASE.

The protein belongs to the transglycosylase family. SceD subfamily.

It localises to the secreted. Its function is as follows. Is able to cleave peptidoglycan and affects clumping and separation of bacterial cells. This chain is Probable transglycosylase SceD 1 (sceD1), found in Staphylococcus saprophyticus subsp. saprophyticus (strain ATCC 15305 / DSM 20229 / NCIMB 8711 / NCTC 7292 / S-41).